We begin with the raw amino-acid sequence, 336 residues long: Phenylalanine--tRNA ligase alpha subunit (336 aa).

Glu-259 provides a ligand contact to Mg(2+).

Belongs to the class-II aminoacyl-tRNA synthetase family. Phe-tRNA synthetase alpha subunit type 1 subfamily. As to quaternary structure, tetramer of two alpha and two beta subunits. The cofactor is Mg(2+).

Its subcellular location is the cytoplasm. It catalyses the reaction tRNA(Phe) + L-phenylalanine + ATP = L-phenylalanyl-tRNA(Phe) + AMP + diphosphate + H(+). In Tropheryma whipplei (strain Twist) (Whipple's bacillus), this protein is Phenylalanine--tRNA ligase alpha subunit.